Here is a 248-residue protein sequence, read N- to C-terminus: Phycocyanobilin:ferredoxin oxidoreductase (248 aa).

Belongs to the HY2 family.

It carries out the reaction (2R,3Z)-phycocyanobilin + 4 oxidized [2Fe-2S]-[ferredoxin] = biliverdin IXalpha + 4 reduced [2Fe-2S]-[ferredoxin] + 4 H(+). In terms of biological role, catalyzes the four-electron reduction of biliverdin IX-alpha (2-electron reduction at both the A and D rings); the reaction proceeds via an isolatable 2-electron intermediate, 181,182-dihydrobiliverdin. The chain is Phycocyanobilin:ferredoxin oxidoreductase (pcyA) from Synechococcus elongatus (strain ATCC 33912 / PCC 7942 / FACHB-805) (Anacystis nidulans R2).